Here is a 254-residue protein sequence, read N- to C-terminus: DNA repair protein RecO (254 aa).

It belongs to the RecO family.

Involved in DNA repair and RecF pathway recombination. The protein is DNA repair protein RecO of Anaeromyxobacter sp. (strain K).